The sequence spans 110 residues: MSKAIIKFVRLSPTKARLIAREVQGMNAELALASLQFMPNRGAKFIANAISSAVANGGFEPEEVVVTSCRVDAGPVLKRFRPRARGTASKIRKPTSHVMVEVSKPEKKEA.

Residues 84–95 (ARGTASKIRKPT) are compositionally biased toward basic residues. The disordered stretch occupies residues 84-110 (ARGTASKIRKPTSHVMVEVSKPEKKEA).

The protein belongs to the universal ribosomal protein uL22 family. In terms of assembly, part of the 50S ribosomal subunit.

Functionally, this protein binds specifically to 23S rRNA; its binding is stimulated by other ribosomal proteins, e.g. L4, L17, and L20. It is important during the early stages of 50S assembly. It makes multiple contacts with different domains of the 23S rRNA in the assembled 50S subunit and ribosome. Its function is as follows. The globular domain of the protein is located near the polypeptide exit tunnel on the outside of the subunit, while an extended beta-hairpin is found that lines the wall of the exit tunnel in the center of the 70S ribosome. This chain is Large ribosomal subunit protein uL22, found in Campylobacter concisus (strain 13826).